The following is a 280-amino-acid chain: Putative pyruvate, phosphate dikinase regulatory protein (280 aa).

An ADP-binding site is contributed by 153-160 (GISRTSKT).

It belongs to the pyruvate, phosphate/water dikinase regulatory protein family. PDRP subfamily.

The enzyme catalyses N(tele)-phospho-L-histidyl/L-threonyl-[pyruvate, phosphate dikinase] + ADP = N(tele)-phospho-L-histidyl/O-phospho-L-threonyl-[pyruvate, phosphate dikinase] + AMP + H(+). It catalyses the reaction N(tele)-phospho-L-histidyl/O-phospho-L-threonyl-[pyruvate, phosphate dikinase] + phosphate + H(+) = N(tele)-phospho-L-histidyl/L-threonyl-[pyruvate, phosphate dikinase] + diphosphate. Its function is as follows. Bifunctional serine/threonine kinase and phosphorylase involved in the regulation of the pyruvate, phosphate dikinase (PPDK) by catalyzing its phosphorylation/dephosphorylation. In Bartonella quintana (strain Toulouse) (Rochalimaea quintana), this protein is Putative pyruvate, phosphate dikinase regulatory protein.